Here is a 264-residue protein sequence, read N- to C-terminus: MKKVTINDLIKCKQEGRKFATSTAYDASFAQLFESQDMPVLLVGDSLGMVLQGRNDTLPVTVEDIAYHTRSVRAGSPNCLLMADMPFMSYATPEQACENAATLMRAGANMVKIEGGSWLIETVKMLTERAVPVCAHLGLTPQSVNIFGGYKVQGRDNEQADKMVADALALQNAGAQIVLLECVPASLAKRITEACDVPVIGIGAGNVTDGQILVMHDMFGISANYMPKFSKNFLAETGDMRKAVALYKEEVESALFPDDAHTIA.

Mg(2+) is bound by residues Asp45 and Asp84. Residues 45 to 46 (DS), Asp84, and Lys112 contribute to the 3-methyl-2-oxobutanoate site. Glu114 contacts Mg(2+). Catalysis depends on Glu181, which acts as the Proton acceptor.

The protein belongs to the PanB family. In terms of assembly, homodecamer; pentamer of dimers. Requires Mg(2+) as cofactor.

Its subcellular location is the cytoplasm. The enzyme catalyses 3-methyl-2-oxobutanoate + (6R)-5,10-methylene-5,6,7,8-tetrahydrofolate + H2O = 2-dehydropantoate + (6S)-5,6,7,8-tetrahydrofolate. The protein operates within cofactor biosynthesis; (R)-pantothenate biosynthesis; (R)-pantoate from 3-methyl-2-oxobutanoate: step 1/2. Its function is as follows. Catalyzes the reversible reaction in which hydroxymethyl group from 5,10-methylenetetrahydrofolate is transferred onto alpha-ketoisovalerate to form ketopantoate. In Vibrio atlanticus (strain LGP32) (Vibrio splendidus (strain Mel32)), this protein is 3-methyl-2-oxobutanoate hydroxymethyltransferase.